A 650-amino-acid polypeptide reads, in one-letter code: DNA gyrase subunit B (650 aa).

Positions 400–414 are enriched in basic and acidic residues; the sequence is RRSQEARELTRRKSP. Residues 400–422 are disordered; it reads RRSQEARELTRRKSPFDSGSLPG. In terms of domain architecture, Toprim spans 435-549; the sequence is SELYIVEGDS…QGNIFIAQPP (115 aa). Glutamate 441, aspartate 514, and aspartate 516 together coordinate Mg(2+).

This sequence belongs to the type II topoisomerase GyrB family. Heterotetramer, composed of two GyrA and two GyrB chains. In the heterotetramer, GyrA contains the active site tyrosine that forms a transient covalent intermediate with DNA, while GyrB binds cofactors and catalyzes ATP hydrolysis. The cofactor is Mg(2+). Mn(2+) serves as cofactor. It depends on Ca(2+) as a cofactor.

It is found in the cytoplasm. The enzyme catalyses ATP-dependent breakage, passage and rejoining of double-stranded DNA.. In terms of biological role, a type II topoisomerase that negatively supercoils closed circular double-stranded (ds) DNA in an ATP-dependent manner to modulate DNA topology and maintain chromosomes in an underwound state. Negative supercoiling favors strand separation, and DNA replication, transcription, recombination and repair, all of which involve strand separation. Also able to catalyze the interconversion of other topological isomers of dsDNA rings, including catenanes and knotted rings. Type II topoisomerases break and join 2 DNA strands simultaneously in an ATP-dependent manner. The polypeptide is DNA gyrase subunit B (Mycoplasma genitalium (strain ATCC 33530 / DSM 19775 / NCTC 10195 / G37) (Mycoplasmoides genitalium)).